A 338-amino-acid chain; its full sequence is Ketol-acid reductoisomerase (NADP(+)) (338 aa).

Residues 1-181 form the KARI N-terminal Rossmann domain; it reads MKVFYDKDAD…GGGRAGIIET (181 aa). NADP(+) is bound by residues 24 to 27, R47, and S52; that span reads YGSQ. H107 is a catalytic residue. Residue G133 coordinates NADP(+). Residues 182–327 form the KARI C-terminal knotted domain; that stretch reads NFREETETDL…SKLRAMMPWI (146 aa). Mg(2+) contacts are provided by D190, E194, E226, and E230. Substrate is bound at residue S251.

It belongs to the ketol-acid reductoisomerase family. The cofactor is Mg(2+).

The catalysed reaction is (2R)-2,3-dihydroxy-3-methylbutanoate + NADP(+) = (2S)-2-acetolactate + NADPH + H(+). It carries out the reaction (2R,3R)-2,3-dihydroxy-3-methylpentanoate + NADP(+) = (S)-2-ethyl-2-hydroxy-3-oxobutanoate + NADPH + H(+). It functions in the pathway amino-acid biosynthesis; L-isoleucine biosynthesis; L-isoleucine from 2-oxobutanoate: step 2/4. The protein operates within amino-acid biosynthesis; L-valine biosynthesis; L-valine from pyruvate: step 2/4. Its function is as follows. Involved in the biosynthesis of branched-chain amino acids (BCAA). Catalyzes an alkyl-migration followed by a ketol-acid reduction of (S)-2-acetolactate (S2AL) to yield (R)-2,3-dihydroxy-isovalerate. In the isomerase reaction, S2AL is rearranged via a Mg-dependent methyl migration to produce 3-hydroxy-3-methyl-2-ketobutyrate (HMKB). In the reductase reaction, this 2-ketoacid undergoes a metal-dependent reduction by NADPH to yield (R)-2,3-dihydroxy-isovalerate. This is Ketol-acid reductoisomerase (NADP(+)) from Paraburkholderia xenovorans (strain LB400).